The following is a 199-amino-acid chain: Holliday junction branch migration complex subunit RuvA (199 aa).

The tract at residues M1 to A64 is domain I. The segment at S65 to M143 is domain II. Positions R144 to G150 are flexible linker. The tract at residues S151–L199 is domain III.

The protein belongs to the RuvA family. As to quaternary structure, homotetramer. Forms an RuvA(8)-RuvB(12)-Holliday junction (HJ) complex. HJ DNA is sandwiched between 2 RuvA tetramers; dsDNA enters through RuvA and exits via RuvB. An RuvB hexamer assembles on each DNA strand where it exits the tetramer. Each RuvB hexamer is contacted by two RuvA subunits (via domain III) on 2 adjacent RuvB subunits; this complex drives branch migration. In the full resolvosome a probable DNA-RuvA(4)-RuvB(12)-RuvC(2) complex forms which resolves the HJ.

The protein resides in the cytoplasm. The RuvA-RuvB-RuvC complex processes Holliday junction (HJ) DNA during genetic recombination and DNA repair, while the RuvA-RuvB complex plays an important role in the rescue of blocked DNA replication forks via replication fork reversal (RFR). RuvA specifically binds to HJ cruciform DNA, conferring on it an open structure. The RuvB hexamer acts as an ATP-dependent pump, pulling dsDNA into and through the RuvAB complex. HJ branch migration allows RuvC to scan DNA until it finds its consensus sequence, where it cleaves and resolves the cruciform DNA. The protein is Holliday junction branch migration complex subunit RuvA of Nitrosococcus oceani (strain ATCC 19707 / BCRC 17464 / JCM 30415 / NCIMB 11848 / C-107).